Here is a 120-residue protein sequence, read N- to C-terminus: Meiosis expressed gene 1 protein homolog (120 aa).

The tract at residues 1 to 45 is disordered; that stretch reads MDGLAIGGVSAPMTAERPQQVKKQLSRRTPDAADGRKPTRMERAK. A compositionally biased stretch (basic and acidic residues) spans 28–45; the sequence is RTPDAADGRKPTRMERAK.

This sequence belongs to the MEIG1 family.

This is Meiosis expressed gene 1 protein homolog from Oxyrrhis marina (Dinoflagellate).